The following is an 85-amino-acid chain: Large ribosomal subunit protein bL27 (85 aa).

The disordered stretch occupies residues 1–21 (MAHKKAGGSTRNGRDSESKRL).

Belongs to the bacterial ribosomal protein bL27 family.

This chain is Large ribosomal subunit protein bL27, found in Photorhabdus laumondii subsp. laumondii (strain DSM 15139 / CIP 105565 / TT01) (Photorhabdus luminescens subsp. laumondii).